A 237-amino-acid chain; its full sequence is Protein YIPF4 (237 aa).

Residues 1–106 (MQFSPTNGDF…FNRQVVRDNP (106 aa)) are Cytoplasmic-facing. A helical membrane pass occupies residues 107 to 127 (DFWGPLAVVLLFSMISIYGQF). Residues 128–131 (RVVS) are Lumenal-facing. A helical membrane pass occupies residues 132–152 (WIITIWIFGSLTIFLLARVLG). At 153–160 (GEVSYGQV) the chain is on the cytoplasmic side. A helical transmembrane segment spans residues 161–181 (LGVIGYSLLPLIVIAPLLLVI). Residues 182 to 188 (GGFEVVS) are Lumenal-facing. A helical membrane pass occupies residues 189-209 (TLIKLFGVFWAAYSAASLLVG). Residues 210-216 (DEFKTKK) are Cytoplasmic-facing. The helical transmembrane segment at 217 to 237 (PLLIYPIFLLYIYFLSLYTGV) threads the bilayer.

It belongs to the YIP1 family.

It is found in the golgi apparatus. The protein localises to the cis-Golgi network membrane. Its function is as follows. Involved in the maintenance of the Golgi structure. The protein is Protein YIPF4 (yipf4) of Danio rerio (Zebrafish).